The primary structure comprises 232 residues: Small ribosomal subunit protein uS2 (232 aa).

This sequence belongs to the universal ribosomal protein uS2 family.

This chain is Small ribosomal subunit protein uS2, found in Heliobacterium modesticaldum (strain ATCC 51547 / Ice1).